Here is a 945-residue protein sequence, read N- to C-terminus: Isoleucine--tRNA ligase (945 aa).

A 'HIGH' region motif is present at residues 66–76; that stretch reads PYANGDIHLGH. Position 581 (glutamate 581) interacts with L-isoleucyl-5'-AMP. Positions 622-626 match the 'KMSKS' region motif; the sequence is KMSKS. Residue lysine 625 participates in ATP binding. 4 residues coordinate Zn(2+): cysteine 908, cysteine 911, cysteine 928, and cysteine 931.

It belongs to the class-I aminoacyl-tRNA synthetase family. IleS type 1 subfamily. As to quaternary structure, monomer. Zn(2+) is required as a cofactor.

Its subcellular location is the cytoplasm. It catalyses the reaction tRNA(Ile) + L-isoleucine + ATP = L-isoleucyl-tRNA(Ile) + AMP + diphosphate. Its function is as follows. Catalyzes the attachment of isoleucine to tRNA(Ile). As IleRS can inadvertently accommodate and process structurally similar amino acids such as valine, to avoid such errors it has two additional distinct tRNA(Ile)-dependent editing activities. One activity is designated as 'pretransfer' editing and involves the hydrolysis of activated Val-AMP. The other activity is designated 'posttransfer' editing and involves deacylation of mischarged Val-tRNA(Ile). This chain is Isoleucine--tRNA ligase, found in Paraburkholderia phytofirmans (strain DSM 17436 / LMG 22146 / PsJN) (Burkholderia phytofirmans).